Reading from the N-terminus, the 294-residue chain is Elongation factor Ts (294 aa).

The segment at 80–83 (TDFV) is involved in Mg(2+) ion dislocation from EF-Tu.

Belongs to the EF-Ts family.

The protein localises to the cytoplasm. Functionally, associates with the EF-Tu.GDP complex and induces the exchange of GDP to GTP. It remains bound to the aminoacyl-tRNA.EF-Tu.GTP complex up to the GTP hydrolysis stage on the ribosome. This is Elongation factor Ts from Listeria innocua serovar 6a (strain ATCC BAA-680 / CLIP 11262).